A 737-amino-acid polypeptide reads, in one-letter code: Prospero homeobox protein 1 (737 aa).

Residues 1–28 (MPDHDSTALLSRQTKRRRVDIGVKRTVG) form an interaction with RORG region. Polar residues predominate over residues 103 to 135 (KNGGTEPSFQASGLSSTGSEVHQEDICSNSSRD). A disordered region spans residues 103 to 149 (KNGGTEPSFQASGLSSTGSEVHQEDICSNSSRDSPPECLSPFGRPTM). Phosphoserine is present on residues S177, S179, and S199. The disordered stretch occupies residues 178–242 (HSPSVALRGN…REERRQLKQQ (65 aa)). The segment covering 213-223 (LPQQQQQSFQQ) has biased composition (low complexity). Residues 227 to 242 (ARKEQKREERRQLKQQ) show a composition bias toward basic and acidic residues. Phosphoserine occurs at positions 291 and 295. Over residues 320–337 (MAENKPKREGNNKERDHG) the composition is skewed to basic and acidic residues. 2 disordered regions span residues 320 to 344 (MAEN…LQPE) and 445 to 476 (KNSS…TGFT). K324 participates in a covalent cross-link: Glycyl lysine isopeptide (Lys-Gly) (interchain with G-Cter in SUMO2). Polar residues predominate over residues 464-476 (LHQSPLSATTGFT). Residues S511, S514, and S557 each carry the phosphoserine modification. The Prospero-type homeo domain occupies 577 to 635 (QEGLSPNHLKKAKLMFFYTRYPSSNMLKTYFSDVKFNRCITSQLIKWFSNFREFYYIQM). The segment at 577 to 735 (QEGLSPNHLK…KSPNCLQELL (159 aa)) is homeo-Prospero. The Prospero domain maps to 636 to 735 (EKYARQAIND…KSPNCLQELL (100 aa)). The segment at 723–729 (EIFKSPN) is essential for nuclear localization, interaction with RORG, repression of RORG transcriptional activator activity.

The protein belongs to the Prospero homeodomain family. In terms of assembly, interacts with RORA and RORG (via AF-2 motif). In terms of tissue distribution, most actively expressed in the developing lens. Detected also in embryonic brain, lung, liver and kidney. In adult, it is more abundant in heart and liver than in brain, skeletal muscle, kidney and pancreas.

It localises to the nucleus. Transcription factor involved in developmental processes such as cell fate determination, gene transcriptional regulation and progenitor cell regulation in a number of organs. Plays a critical role in embryonic development and functions as a key regulatory protein in neurogenesis and the development of the heart, eye lens, liver, pancreas and the lymphatic system. Involved in the regulation of the circadian rhythm. Represses: transcription of the retinoid-related orphan receptor RORG, transcriptional activator activity of RORA and RORG and the expression of RORA/G-target genes including core clock components: BMAL1, NPAS2 and CRY1 and metabolic genes: AVPR1A and ELOVL3. This is Prospero homeobox protein 1 (PROX1) from Homo sapiens (Human).